The primary structure comprises 682 residues: Probable methyltransferase PMT12 (682 aa).

The Cytoplasmic segment spans residues 1–11 (MKLFLNSNLLR). A helical; Signal-anchor for type II membrane protein transmembrane segment spans residues 12–32 (NSIFFKISAFVLISVACFFLG). The Lumenal portion of the chain corresponds to 33-682 (KHWSEDGFRR…KRRKTKGKRA (650 aa)). Asparagine 67, asparagine 103, asparagine 125, asparagine 155, asparagine 173, asparagine 193, asparagine 273, asparagine 350, asparagine 395, asparagine 419, asparagine 600, and asparagine 625 each carry an N-linked (GlcNAc...) asparagine glycan.

Belongs to the methyltransferase superfamily.

The protein resides in the golgi apparatus membrane. This chain is Probable methyltransferase PMT12, found in Arabidopsis thaliana (Mouse-ear cress).